We begin with the raw amino-acid sequence, 176 residues long: MPMRPLVIVPDPILREISKPVEYIDSAVQKLADDMLETMYHAQGVGLAAIQIGIPLRMLVLDVSRNDEQKNPLVIINPEVLWLSDERNIYKEGCLSIPEYFAEVERPKRLCVRYQNREGKQTEIEADDLLATCLQHEIDHLNGRLFIDYLSKIKRDMVIRKFKKRAKEKNTQEAVL.

The Fe cation site is built by C94 and H136. E137 is a catalytic residue. Position 140 (H140) interacts with Fe cation.

It belongs to the polypeptide deformylase family. Fe(2+) serves as cofactor.

The enzyme catalyses N-terminal N-formyl-L-methionyl-[peptide] + H2O = N-terminal L-methionyl-[peptide] + formate. In terms of biological role, removes the formyl group from the N-terminal Met of newly synthesized proteins. Requires at least a dipeptide for an efficient rate of reaction. N-terminal L-methionine is a prerequisite for activity but the enzyme has broad specificity at other positions. The chain is Peptide deformylase from Bartonella henselae (strain ATCC 49882 / DSM 28221 / CCUG 30454 / Houston 1) (Rochalimaea henselae).